The following is a 219-amino-acid chain: Ribose-5-phosphate isomerase A (219 aa).

Substrate is bound by residues 28–31 (SGST), 81–84 (DGAD), and 94–97 (KGGG). Glu103 acts as the Proton acceptor in catalysis. Residue Lys121 coordinates substrate.

It belongs to the ribose 5-phosphate isomerase family. Homodimer.

The catalysed reaction is aldehydo-D-ribose 5-phosphate = D-ribulose 5-phosphate. The protein operates within carbohydrate degradation; pentose phosphate pathway; D-ribose 5-phosphate from D-ribulose 5-phosphate (non-oxidative stage): step 1/1. Catalyzes the reversible conversion of ribose-5-phosphate to ribulose 5-phosphate. In Actinobacillus succinogenes (strain ATCC 55618 / DSM 22257 / CCUG 43843 / 130Z), this protein is Ribose-5-phosphate isomerase A.